The following is a 389-amino-acid chain: GTPase Obg (389 aa).

One can recognise an Obg domain in the interval 1–159 (MKFVDEAVIK…RELRLELLLL (159 aa)). Positions 160–333 (ADVGMLGLPN…LCYKLADFME (174 aa)) constitute an OBG-type G domain. GTP contacts are provided by residues 166–173 (GLPNAGKS), 191–195 (FTTLI), 213–216 (DIPG), 283–286 (NKVD), and 314–316 (SAV). Residues S173 and T193 each coordinate Mg(2+). The interval 359–389 (NQGEVITEDDDDDWDDWDDEEDDGHVIYVRE) is disordered. The segment covering 364 to 381 (ITEDDDDDWDDWDDEEDD) has biased composition (acidic residues).

It belongs to the TRAFAC class OBG-HflX-like GTPase superfamily. OBG GTPase family. As to quaternary structure, monomer. Requires Mg(2+) as cofactor.

It is found in the cytoplasm. Functionally, an essential GTPase which binds GTP, GDP and possibly (p)ppGpp with moderate affinity, with high nucleotide exchange rates and a fairly low GTP hydrolysis rate. Plays a role in control of the cell cycle, stress response, ribosome biogenesis and in those bacteria that undergo differentiation, in morphogenesis control. The polypeptide is GTPase Obg (Vibrio vulnificus (strain CMCP6)).